Reading from the N-terminus, the 117-residue chain is Large ribosomal subunit protein bL20c (117 aa).

Belongs to the bacterial ribosomal protein bL20 family.

It is found in the plastid. The protein resides in the chloroplast. Its function is as follows. Binds directly to 23S ribosomal RNA and is necessary for the in vitro assembly process of the 50S ribosomal subunit. It is not involved in the protein synthesizing functions of that subunit. The polypeptide is Large ribosomal subunit protein bL20c (Eucalyptus globulus subsp. globulus (Tasmanian blue gum)).